Here is a 212-residue protein sequence, read N- to C-terminus: Thiamine-phosphate synthase (212 aa).

Residues 40–44 and asparagine 75 each bind 4-amino-2-methyl-5-(diphosphooxymethyl)pyrimidine; that span reads QFREK. 2 residues coordinate Mg(2+): aspartate 76 and aspartate 95. Serine 113 provides a ligand contact to 4-amino-2-methyl-5-(diphosphooxymethyl)pyrimidine. 2-[(2R,5Z)-2-carboxy-4-methylthiazol-5(2H)-ylidene]ethyl phosphate is bound at residue 139–141; that stretch reads TSS. 4-amino-2-methyl-5-(diphosphooxymethyl)pyrimidine is bound at residue lysine 142. Residues glycine 171 and 191–192 each bind 2-[(2R,5Z)-2-carboxy-4-methylthiazol-5(2H)-ylidene]ethyl phosphate; that span reads IS.

This sequence belongs to the thiamine-phosphate synthase family. It depends on Mg(2+) as a cofactor.

The enzyme catalyses 2-[(2R,5Z)-2-carboxy-4-methylthiazol-5(2H)-ylidene]ethyl phosphate + 4-amino-2-methyl-5-(diphosphooxymethyl)pyrimidine + 2 H(+) = thiamine phosphate + CO2 + diphosphate. The catalysed reaction is 2-(2-carboxy-4-methylthiazol-5-yl)ethyl phosphate + 4-amino-2-methyl-5-(diphosphooxymethyl)pyrimidine + 2 H(+) = thiamine phosphate + CO2 + diphosphate. It catalyses the reaction 4-methyl-5-(2-phosphooxyethyl)-thiazole + 4-amino-2-methyl-5-(diphosphooxymethyl)pyrimidine + H(+) = thiamine phosphate + diphosphate. The protein operates within cofactor biosynthesis; thiamine diphosphate biosynthesis; thiamine phosphate from 4-amino-2-methyl-5-diphosphomethylpyrimidine and 4-methyl-5-(2-phosphoethyl)-thiazole: step 1/1. In terms of biological role, condenses 4-methyl-5-(beta-hydroxyethyl)thiazole monophosphate (THZ-P) and 2-methyl-4-amino-5-hydroxymethyl pyrimidine pyrophosphate (HMP-PP) to form thiamine monophosphate (TMP). This is Thiamine-phosphate synthase from Staphylococcus epidermidis (strain ATCC 35984 / DSM 28319 / BCRC 17069 / CCUG 31568 / BM 3577 / RP62A).